The chain runs to 456 residues: L-seryl-tRNA(Sec) selenium transferase (456 aa).

Lys288 carries the N6-(pyridoxal phosphate)lysine modification.

The protein belongs to the SelA family. Pyridoxal 5'-phosphate serves as cofactor.

It is found in the cytoplasm. It carries out the reaction L-seryl-tRNA(Sec) + selenophosphate + H(+) = L-selenocysteinyl-tRNA(Sec) + phosphate. It functions in the pathway aminoacyl-tRNA biosynthesis; selenocysteinyl-tRNA(Sec) biosynthesis; selenocysteinyl-tRNA(Sec) from L-seryl-tRNA(Sec) (bacterial route): step 1/1. Functionally, converts seryl-tRNA(Sec) to selenocysteinyl-tRNA(Sec) required for selenoprotein biosynthesis. The sequence is that of L-seryl-tRNA(Sec) selenium transferase from Helicobacter hepaticus (strain ATCC 51449 / 3B1).